The following is a 653-amino-acid chain: tRNA 5-methylaminomethyl-2-thiouridine biosynthesis bifunctional protein MnmC (653 aa).

The tRNA (mnm(5)s(2)U34)-methyltransferase stretch occupies residues 1-233 (MKTAPITPGR…KRDITVARFT (233 aa)). The FAD-dependent cmnm(5)s(2)U34 oxidoreductase stretch occupies residues 258 to 653 (IGAGLAGCAA…YALPRWRSDS (396 aa)).

In the N-terminal section; belongs to the methyltransferase superfamily. tRNA (mnm(5)s(2)U34)-methyltransferase family. The protein in the C-terminal section; belongs to the DAO family. FAD is required as a cofactor.

The protein localises to the cytoplasm. The enzyme catalyses 5-aminomethyl-2-thiouridine(34) in tRNA + S-adenosyl-L-methionine = 5-methylaminomethyl-2-thiouridine(34) in tRNA + S-adenosyl-L-homocysteine + H(+). Catalyzes the last two steps in the biosynthesis of 5-methylaminomethyl-2-thiouridine (mnm(5)s(2)U) at the wobble position (U34) in tRNA. Catalyzes the FAD-dependent demodification of cmnm(5)s(2)U34 to nm(5)s(2)U34, followed by the transfer of a methyl group from S-adenosyl-L-methionine to nm(5)s(2)U34, to form mnm(5)s(2)U34. The sequence is that of tRNA 5-methylaminomethyl-2-thiouridine biosynthesis bifunctional protein MnmC from Methylibium petroleiphilum (strain ATCC BAA-1232 / LMG 22953 / PM1).